The primary structure comprises 148 residues: Antigen GM6 (148 aa).

The tract at residues 1-22 (KLKASDSRSFLDPMPEGVPLSE) is disordered. 2 consecutive repeat copies span residues 1-68 (KLKA…HELA) and 69-136 (KLKA…HELA). A 3; truncated repeat occupies 137–148 (KLKASDSRSFQS).

It localises to the cytoplasm. The protein resides in the cytoskeleton. In Trypanosoma brucei gambiense, this protein is Antigen GM6 (GM6).